A 285-amino-acid polypeptide reads, in one-letter code: Bifunctional protein FolD (285 aa).

NADP(+)-binding positions include 166–168 and Ile-232; that span reads GAS.

Belongs to the tetrahydrofolate dehydrogenase/cyclohydrolase family. Homodimer.

The enzyme catalyses (6R)-5,10-methylene-5,6,7,8-tetrahydrofolate + NADP(+) = (6R)-5,10-methenyltetrahydrofolate + NADPH. It carries out the reaction (6R)-5,10-methenyltetrahydrofolate + H2O = (6R)-10-formyltetrahydrofolate + H(+). Its pathway is one-carbon metabolism; tetrahydrofolate interconversion. Functionally, catalyzes the oxidation of 5,10-methylenetetrahydrofolate to 5,10-methenyltetrahydrofolate and then the hydrolysis of 5,10-methenyltetrahydrofolate to 10-formyltetrahydrofolate. The sequence is that of Bifunctional protein FolD from Actinobacillus succinogenes (strain ATCC 55618 / DSM 22257 / CCUG 43843 / 130Z).